The chain runs to 373 residues: Heterogeneous nuclear ribonucleoprotein A3 homolog 1 (373 aa).

Positions 1–25 (MPRGGMDDHWPSSDDQGHDPKEPEQ) are disordered. 2 consecutive RRM domains span residues 27–110 (RKLF…DSAR) and 118–206 (KKIF…SAQR). Disordered stretches follow at residues 196–218 (KQEM…FMGR) and 319–373 (DFGN…GRRF). A compositionally biased stretch (gly residues) spans 207-218 (GRGGGGSNFMGR). A compositionally biased stretch (low complexity) spans 319–333 (DFGNYGGQQQSNYGP). Residues 334–373 (MKGGSFSGRSSGGSGSGPYGGGYGSGGGGGGGGSYGGRRF) show a composition bias toward gly residues.

It localises to the nucleus. The protein is Heterogeneous nuclear ribonucleoprotein A3 homolog 1 of Xenopus laevis (African clawed frog).